Here is a 441-residue protein sequence, read N- to C-terminus: uncharacterized protein (441 aa).

A run of 11 helical transmembrane segments spans residues 62-82 (FLSL…FEIG), 88-108 (LILT…KLFG), 112-132 (IALT…IIAL), 154-174 (ALLH…LLVV), 192-212 (WMFF…YLLY), 224-244 (ALMI…GVAS), 247-267 (ANLS…YMVC), 312-332 (IVLF…ATFA), 335-355 (ISVM…IIFL), 363-383 (QGMW…NLLL), and 399-419 (ILCS…LLYA).

It is found in the membrane. This is an uncharacterized protein from Schizosaccharomyces pombe (strain 972 / ATCC 24843) (Fission yeast).